The primary structure comprises 381 residues: Dihydroorotate dehydrogenase (quinone) (381 aa).

FMN-binding positions include 77–81 (AGCDK) and alanine 101. Lysine 81 lines the substrate pocket. 126–129 (NRLG) contributes to the substrate binding site. FMN contacts are provided by asparagine 158 and asparagine 191. Asparagine 191 is a substrate binding site. Serine 194 (nucleophile) is an active-site residue. Residue asparagine 196 participates in substrate binding. Residues lysine 229 and threonine 257 each coordinate FMN. 258-259 (NT) is a binding site for substrate. FMN is bound by residues glycine 287, glycine 316, and 337–338 (YT).

Belongs to the dihydroorotate dehydrogenase family. Type 2 subfamily. In terms of assembly, monomer. The cofactor is FMN.

It is found in the cell membrane. The enzyme catalyses (S)-dihydroorotate + a quinone = orotate + a quinol. It participates in pyrimidine metabolism; UMP biosynthesis via de novo pathway; orotate from (S)-dihydroorotate (quinone route): step 1/1. Catalyzes the conversion of dihydroorotate to orotate with quinone as electron acceptor. In Synechocystis sp. (strain ATCC 27184 / PCC 6803 / Kazusa), this protein is Dihydroorotate dehydrogenase (quinone) (pyrD).